Consider the following 200-residue polypeptide: Recombination protein RecR (200 aa).

Residues 58-75 form a C4-type zinc finger; that stretch reads CSNCFCLKISQTSPCNFC. The Toprim domain maps to 82–177; the sequence is SSLCIVATPK…KISRLALGMP (96 aa).

Belongs to the RecR family.

Its function is as follows. May play a role in DNA repair. It seems to be involved in an RecBC-independent recombinational process of DNA repair. It may act with RecF and RecO. The protein is Recombination protein RecR of Chlamydia trachomatis serovar L2 (strain ATCC VR-902B / DSM 19102 / 434/Bu).